A 221-amino-acid chain; its full sequence is Putative efflux system component YhbJ (221 aa).

Residues 17-37 (LILTNIIGLIVVLAIIAGGAY) form a helical membrane-spanning segment.

Belongs to the membrane fusion protein (MFP) (TC 8.A.1) family.

The protein resides in the cell membrane. This Bacillus subtilis (strain 168) protein is Putative efflux system component YhbJ (yhbJ).